The following is a 29-amino-acid chain: Cyclotide mela-3 (29 aa).

A cross-link (cyclopeptide (Gly-Asp)) is located at residues 1 to 29 (GKPICGETCFKGKCYTPGCTCSYPICKKD). 3 disulfides stabilise this stretch: cysteine 5–cysteine 19, cysteine 9–cysteine 21, and cysteine 14–cysteine 26.

In terms of processing, this is a cyclic peptide. Post-translationally, contains 3 disulfide bonds.

Its function is as follows. Probably participates in a plant defense mechanism (Potential). Binds to and induces leakage in phospholipd membranes, particularly ones containing 1-palmitoyl-2-oleophosphatidylethanolamine (POPE). In vitro, displays cytotoxicity against cultured cells. Not active against Gram-negative bacterium E.coli ATCC 25922 or Gram-positive bacterium S.aureus ATCC 25923 up to a concentration of 64 uM. The chain is Cyclotide mela-3 from Melicytus latifolius (Norfolk Island mahoe).